Here is a 714-residue protein sequence, read N- to C-terminus: Polyribonucleotide nucleotidyltransferase (714 aa).

Mg(2+)-binding residues include Asp-487 and Asp-493. The region spanning 554–613 is the KH domain; sequence PRIEVLQIPTDKIRDVIGTGGKVIREIVEKTGAKINIEDDGTVKVASANGESIRAAIKWI. The region spanning 623–691 is the S1 motif domain; sequence GQIYDGTVVK…DRGKVRLSMK (69 aa).

It belongs to the polyribonucleotide nucleotidyltransferase family. It depends on Mg(2+) as a cofactor.

Its subcellular location is the cytoplasm. The catalysed reaction is RNA(n+1) + phosphate = RNA(n) + a ribonucleoside 5'-diphosphate. Involved in mRNA degradation. Catalyzes the phosphorolysis of single-stranded polyribonucleotides processively in the 3'- to 5'-direction. This Afipia carboxidovorans (strain ATCC 49405 / DSM 1227 / KCTC 32145 / OM5) (Oligotropha carboxidovorans) protein is Polyribonucleotide nucleotidyltransferase.